The following is a 426-amino-acid chain: MAIIEAVGAREILDSRGNPTIEVEVALDDGTTARAGVPSGASTGAFEAVERRDGDKTRYGGKGVEDAVHTVIDTIAPEVLGFDASEQRLLDTTLIDLDGSSNKGKLGANAILGVSLAVARAAADSADLPLFRYVGGPNAHLLPVPMMNILNGGSHADSNVDVQEFMVAPIGAPSFREALRRGAEVYHALKSVLKERGLATGLGDEGGFAPNLPSNRDALDLILVAVEKAGYSAGTDVALALDVASTEFFSDGAYQFEGRPHTPEEMVAYYTQLIADYPMVSIEDPLSEDEWDSWAHLVSETGDRVQIVGDDLFVTNPERLAKGIELKAANSLLVKVNQIGTLTETLDAVTLAQRSGFTAMVSHRSGETEDTTIADLSVAVNAGQIKTGAPARGERINKYNQLLRIEDELGDAAVYAGRTAFPRLQG.

Position 163 (Q163) interacts with (2R)-2-phosphoglycerate. Residue E205 is the Proton donor of the active site. Mg(2+) is bound by residues D242, E283, and D310. (2R)-2-phosphoglycerate is bound by residues K335, R364, S365, and K386. The active-site Proton acceptor is K335.

The protein belongs to the enolase family. It depends on Mg(2+) as a cofactor.

Its subcellular location is the cytoplasm. It localises to the secreted. The protein resides in the cell surface. The enzyme catalyses (2R)-2-phosphoglycerate = phosphoenolpyruvate + H2O. Its pathway is carbohydrate degradation; glycolysis; pyruvate from D-glyceraldehyde 3-phosphate: step 4/5. Functionally, catalyzes the reversible conversion of 2-phosphoglycerate (2-PG) into phosphoenolpyruvate (PEP). It is essential for the degradation of carbohydrates via glycolysis. This chain is Enolase, found in Beutenbergia cavernae (strain ATCC BAA-8 / DSM 12333 / CCUG 43141 / JCM 11478 / NBRC 16432 / NCIMB 13614 / HKI 0122).